The primary structure comprises 1777 residues: Fatty acid synthase subunit alpha (1777 aa).

Residues 101–124 (APVESADNEPAQPAASSTPAAPAP) form a disordered region. Over residues 110 to 120 (PAQPAASSTPA) the composition is skewed to low complexity. One can recognise a Carrier domain in the interval 151–237 (LSAIDVVISI…KVMGGHIDRL (87 aa)). O-(pantetheine 4'-phosphoryl)serine is present on Ser-186. Residues 563 to 803 (FTGRRVLVTG…ILSLLSGDIL (241 aa)) are ketoreductase (KR) domain. The region spanning 1007-1539 (KEIMHEVVID…QKGGLVVGIA (533 aa)) is the Ketosynthase family 3 (KS3) domain. Catalysis depends on for beta-ketoacyl synthase activity residues Cys-1193, His-1424, and His-1465. Asp-1661 is a binding site for Mg(2+). Acetyl-CoA-binding positions include 1661 to 1663 (DIE), 1706 to 1716 (EAIFKSLQIPS), 1730 to 1734 (SNGAQ), and 1760 to 1762 (ITH).

Belongs to the thiolase-like superfamily. Fungal fatty acid synthetase subunit alpha family. Fatty acid synthase is composed of alpha and beta subunits.

It catalyses the reaction acetyl-CoA + n malonyl-CoA + 2n NADPH + 4n H(+) = a long-chain-acyl-CoA + n CoA + n CO2 + 2n NADP(+).. The enzyme catalyses a fatty acyl-[ACP] + malonyl-[ACP] + H(+) = a 3-oxoacyl-[ACP] + holo-[ACP] + CO2. The catalysed reaction is a (3R)-hydroxyacyl-[ACP] + NADP(+) = a 3-oxoacyl-[ACP] + NADPH + H(+). Its pathway is secondary metabolite biosynthesis. Functionally, fatty acid synthase alpha subunit; part of the gene cluster that mediates the biosynthesis of oryzines, natural products with an unusual maleidride backbone. The two subunits of the fungal fatty acid synthase oryfasA and oryfasB probably form octenoic acid. This fatty acid is most likely activated by the acyl-CoA ligase oryP to give octenyl-CoA before the citrate synthase-like protein oryE catalyzes condensation with oxaloacetate to form tricarboxylic acid. The next steps of the pathways are conjectural, but a favorite possible route has been proposed, beginning with decarboxylation and concomitant dehydration by the decarboxylase oryM, followed by tautomerization, which may lead to the production of a diene intermediate. Reduction of this diene intermediate could give the known metabolite piliformic acid. On the pathway to oryzine B and oryzine A, however, hydroxylation of the diene by the alpha-ketoglutarate-dependent dioxygenase oryG and lactonisation by the lactonohydrolases oryH or oryL could give oryzine B directly. Finally, enoyl reduction by the dehydrogenase oryD would then convert oryzine B into oryzine A. In Aspergillus oryzae (strain ATCC 42149 / RIB 40) (Yellow koji mold), this protein is Fatty acid synthase subunit alpha.